The sequence spans 266 residues: Dihydropteroate synthase (266 aa).

Residues 12-260 form the Pterin-binding domain; sequence AAIMGILNVT…DVKANQDIVA (249 aa). Asparagine 19 contributes to the Mg(2+) binding site. (7,8-dihydropterin-6-yl)methyl diphosphate-binding positions include threonine 59, aspartate 93, asparagine 112, aspartate 176, lysine 212, and 248 to 250; that span reads RVH.

Belongs to the DHPS family. Homodimer or homotrimer. The cofactor is Mg(2+).

The enzyme catalyses (7,8-dihydropterin-6-yl)methyl diphosphate + 4-aminobenzoate = 7,8-dihydropteroate + diphosphate. It participates in cofactor biosynthesis; tetrahydrofolate biosynthesis; 7,8-dihydrofolate from 2-amino-4-hydroxy-6-hydroxymethyl-7,8-dihydropteridine diphosphate and 4-aminobenzoate: step 1/2. Its function is as follows. Catalyzes the condensation of para-aminobenzoate (pABA) with 6-hydroxymethyl-7,8-dihydropterin diphosphate (DHPt-PP) to form 7,8-dihydropteroate (H2Pte), the immediate precursor of folate derivatives. The polypeptide is Dihydropteroate synthase (folP) (Streptococcus pyogenes serotype M3 (strain ATCC BAA-595 / MGAS315)).